Here is a 37-residue protein sequence, read N- to C-terminus: Large ribosomal subunit protein bL36c (37 aa).

It belongs to the bacterial ribosomal protein bL36 family.

The protein localises to the plastid. It is found in the chloroplast. The polypeptide is Large ribosomal subunit protein bL36c (rpl36) (Nephroselmis olivacea (Green alga)).